The following is a 274-amino-acid chain: Large ribosomal subunit protein uL2cz/uL2cy (274 aa).

2 disordered regions span residues 1–21 (MAIH…VDSQ) and 224–252 (NPVD…GYPA).

This sequence belongs to the universal ribosomal protein uL2 family. In terms of assembly, part of the 50S ribosomal subunit.

The protein localises to the plastid. The protein resides in the chloroplast. This chain is Large ribosomal subunit protein uL2cz/uL2cy (rpl2-A), found in Olimarabidopsis pumila (Dwarf rocket).